Here is a 545-residue protein sequence, read N- to C-terminus: Hydroxylamine reductase (545 aa).

[4Fe-4S] cluster is bound by residues cysteine 3, cysteine 6, cysteine 15, and cysteine 21. Histidine 240, glutamate 264, cysteine 309, cysteine 401, cysteine 429, cysteine 454, glutamate 488, and lysine 490 together coordinate hybrid [4Fe-2O-2S] cluster. Cysteine 401 is subject to Cysteine persulfide.

This sequence belongs to the HCP family. [4Fe-4S] cluster is required as a cofactor. Requires hybrid [4Fe-2O-2S] cluster as cofactor.

Its subcellular location is the cytoplasm. It catalyses the reaction A + NH4(+) + H2O = hydroxylamine + AH2 + H(+). Its function is as follows. Catalyzes the reduction of hydroxylamine to form NH(3) and H(2)O. The polypeptide is Hydroxylamine reductase (Rippkaea orientalis (strain PCC 8801 / RF-1) (Cyanothece sp. (strain PCC 8801))).